A 101-amino-acid polypeptide reads, in one-letter code: uncharacterized protein (101 aa).

This is an uncharacterized protein from Shigella flexneri.